The primary structure comprises 126 residues: Copper resistance protein C (126 aa).

Residues 1–23 form the signal peptide; it reads MSILNKAILTGGLVMGVAFSAMA. His-24 is a Cu(2+) binding site. Cu(+)-binding residues include Met-63, Met-66, Met-69, His-72, and Met-75. His-115 serves as a coordination point for Cu(2+).

Belongs to the CopC family. Monomer-dimer equilibrium in solution for the apo protein. Dimerization is significantly enhanced upon binding of copper(I).

It is found in the periplasm. In terms of biological role, copper-binding protein involved in copper resistance. The protein is Copper resistance protein C of Escherichia coli.